Consider the following 232-residue polypeptide: Ribose-5-phosphate isomerase A (232 aa).

Residues 29-32 (TGST), 84-87 (DGAD), and 97-100 (KGGG) each bind substrate. E106 serves as the catalytic Proton acceptor. K124 lines the substrate pocket.

Belongs to the ribose 5-phosphate isomerase family. In terms of assembly, homodimer.

It catalyses the reaction aldehydo-D-ribose 5-phosphate = D-ribulose 5-phosphate. It functions in the pathway carbohydrate degradation; pentose phosphate pathway; D-ribose 5-phosphate from D-ribulose 5-phosphate (non-oxidative stage): step 1/1. Functionally, catalyzes the reversible conversion of ribose-5-phosphate to ribulose 5-phosphate. The sequence is that of Ribose-5-phosphate isomerase A from Brucella suis biovar 1 (strain 1330).